The sequence spans 388 residues: MREYAVFTSESVSEGHPDKMADQISDAILDAILKEDPYARVACETLVKTGAVVLAGEITTTANIDVEAVVRQTVNGIGYHHSDLGFDGSTCAVINMIGKQSPEIAQGVDRQKPEDQGAGDQGLMFGYASRETDVLMPAPISYAHRLMERQAELRRSGALPWLRPDAKSQVTFAYENGKPVRLDAVVLSTQHDPEITQTQLKEAVIEEIIKPIIPAEMFHAATKFHINPTGMFVIGGPVGDCGLTGRKIIVDTYGGMARHGGGAFSGKDPSKVDRSAAYAGRYVAKNIVAAGLADKCEIQVSYAIGVAEPTSISINTFGTAKVSDELIIQLVREHFDLRPFGITRMLNLIQPMYKQTAAYGHFGREGSDTAFTWEKTDKVEALKDAAGL.

ATP is bound at residue His16. Asp18 is a binding site for Mg(2+). Position 44 (Glu44) interacts with K(+). Positions 57 and 100 each coordinate L-methionine. Residues 100–110 are flexible loop; that stretch reads QSPEIAQGVDR. ATP-binding positions include 165 to 167, Asp240, 246 to 247, Ala263, and Lys267; these read DAK and RK. Asp240 is an L-methionine binding site. Lys271 is a binding site for L-methionine.

Belongs to the AdoMet synthase family. As to quaternary structure, homotetramer; dimer of dimers. Mg(2+) is required as a cofactor. Requires K(+) as cofactor.

Its subcellular location is the cytoplasm. It carries out the reaction L-methionine + ATP + H2O = S-adenosyl-L-methionine + phosphate + diphosphate. The protein operates within amino-acid biosynthesis; S-adenosyl-L-methionine biosynthesis; S-adenosyl-L-methionine from L-methionine: step 1/1. In terms of biological role, catalyzes the formation of S-adenosylmethionine (AdoMet) from methionine and ATP. The overall synthetic reaction is composed of two sequential steps, AdoMet formation and the subsequent tripolyphosphate hydrolysis which occurs prior to release of AdoMet from the enzyme. This is S-adenosylmethionine synthase from Acinetobacter baumannii (strain ACICU).